The primary structure comprises 483 residues: E3 ubiquitin-protein ligase TRIM50 (483 aa).

The segment at 16-57 adopts an RING-type zinc-finger fold; it reads CPICLEVFKEPLMLQCGHSYCKDCLDNLSQHLDSELCCPVCR. The segment at 84–125 adopts a B box-type zinc-finger fold; sequence IEPTVCVHHRNPLSLFCEKDQEFICGLCGLLGSHQHHRVTPV. The Zn(2+) site is built by Cys89, His92, Cys111, and His117. Coiled-coil stretches lie at residues 127-169 and 203-236; these read TVYS…NESD and GLVA…GNES. The B30.2/SPRY domain occupies 275-474; that stretch reads DIKLTVWKRL…LPMVLPPPSG (200 aa). The residue at position 372 (Lys372) is an N6-acetyllysine.

Belongs to the TRIM/RBCC family. In terms of assembly, can form dimers and trimers. Interacts with several E2 ubiquitin-conjugating enzymes, including UBE2L6, UBE2E1, UBE2E3. No interaction with UBE2H. Interacts with BECN1. Interacts with SQSTM1. Interacts with NLRP3. Auto-ubiquitinated. In terms of processing, acetylated by EP300 and KAT2B. HDAC6 drives TRIM50 deacetylation. Acetylation antagonizes with TRIM50 ubiquitination. Expressed in the stomach.

It localises to the cytoplasm. The enzyme catalyses S-ubiquitinyl-[E2 ubiquitin-conjugating enzyme]-L-cysteine + [acceptor protein]-L-lysine = [E2 ubiquitin-conjugating enzyme]-L-cysteine + N(6)-ubiquitinyl-[acceptor protein]-L-lysine.. Its function is as follows. E3 ubiquitin-protein ligase that ubiquitinates Beclin-1/BECN1 in a 'Lys-63'-dependent manner enhancing its binding to ULK1. In turn, promotes starvation-induced autophagy activation. Also interacts with p62/SQSTM1 protein and thereby induces the formation and the autophagy clearance of aggresome-associated polyubiquitinated proteins through HDAC6 interaction. Also promotes NLRP3 inflammasome activation by directly inducing NLRP3 oligomerization independent of its E3 ligase function. The polypeptide is E3 ubiquitin-protein ligase TRIM50 (Trim50) (Mus musculus (Mouse)).